Reading from the N-terminus, the 248-residue chain is Protein GrpE (248 aa).

The tract at residues 229–248 (AAPKEDTLPAQENQSSPADS) is disordered. Positions 238–248 (AQENQSSPADS) are enriched in polar residues.

The protein belongs to the GrpE family. Homodimer.

The protein localises to the cytoplasm. In terms of biological role, participates actively in the response to hyperosmotic and heat shock by preventing the aggregation of stress-denatured proteins, in association with DnaK and GrpE. It is the nucleotide exchange factor for DnaK and may function as a thermosensor. Unfolded proteins bind initially to DnaJ; upon interaction with the DnaJ-bound protein, DnaK hydrolyzes its bound ATP, resulting in the formation of a stable complex. GrpE releases ADP from DnaK; ATP binding to DnaK triggers the release of the substrate protein, thus completing the reaction cycle. Several rounds of ATP-dependent interactions between DnaJ, DnaK and GrpE are required for fully efficient folding. The sequence is that of Protein GrpE from Trichormus variabilis (strain ATCC 29413 / PCC 7937) (Anabaena variabilis).